The primary structure comprises 129 residues: Small ribosomal subunit protein uS11 (129 aa).

Belongs to the universal ribosomal protein uS11 family. As to quaternary structure, part of the 30S ribosomal subunit. Interacts with proteins S7 and S18. Binds to IF-3.

Functionally, located on the platform of the 30S subunit, it bridges several disparate RNA helices of the 16S rRNA. Forms part of the Shine-Dalgarno cleft in the 70S ribosome. This Bradyrhizobium sp. (strain ORS 278) protein is Small ribosomal subunit protein uS11.